The chain runs to 646 residues: Interferon-induced GTP-binding protein MxA (646 aa).

The Dynamin-type G domain maps to 34–307 (DLALPAIAVI…LVHHIQKSLP (274 aa)). The G1 motif stretch occupies residues 44-51 (GDQSSGKS). 44–51 (GDQSSGKS) contacts GTP. Residues 69–71 (VTR) are G2 motif. Residues 145 to 148 (DLPG) form a G3 motif region. Residues 145–149 (DLPGI) and 214–217 (TKPD) contribute to the GTP site. The G4 motif stretch occupies residues 214 to 217 (TKPD). Positions 246–249 (RCRG) are G5 motif. The 92-residue stretch at 546-637 (LREMRLHLKS…PLGHLLEVTF (92 aa)) folds into the GED domain.

This sequence belongs to the TRAFAC class dynamin-like GTPase superfamily. Dynamin/Fzo/YdjA family.

Its subcellular location is the cytoplasm. In Danio rerio (Zebrafish), this protein is Interferon-induced GTP-binding protein MxA (mxa).